The following is a 383-amino-acid chain: 1-deoxy-D-xylulose 5-phosphate reductoisomerase (383 aa).

NADPH contacts are provided by T10, G11, S12, I13, N38, and N121. K122 is a 1-deoxy-D-xylulose 5-phosphate binding site. E123 is an NADPH binding site. Position 147 (D147) interacts with Mn(2+). 4 residues coordinate 1-deoxy-D-xylulose 5-phosphate: S148, E149, S172, and H195. E149 contributes to the Mn(2+) binding site. Position 201 (G201) interacts with NADPH. S208, N213, K214, and E217 together coordinate 1-deoxy-D-xylulose 5-phosphate. E217 is a binding site for Mn(2+).

It belongs to the DXR family. Mg(2+) is required as a cofactor. The cofactor is Mn(2+).

It catalyses the reaction 2-C-methyl-D-erythritol 4-phosphate + NADP(+) = 1-deoxy-D-xylulose 5-phosphate + NADPH + H(+). It functions in the pathway isoprenoid biosynthesis; isopentenyl diphosphate biosynthesis via DXP pathway; isopentenyl diphosphate from 1-deoxy-D-xylulose 5-phosphate: step 1/6. In terms of biological role, catalyzes the NADPH-dependent rearrangement and reduction of 1-deoxy-D-xylulose-5-phosphate (DXP) to 2-C-methyl-D-erythritol 4-phosphate (MEP). This is 1-deoxy-D-xylulose 5-phosphate reductoisomerase from Ruthia magnifica subsp. Calyptogena magnifica.